The primary structure comprises 990 residues: DNA polymerase (990 aa).

Residues 936 to 976 are disordered; the sequence is PSDDAARKRARAGPSALRKQKAASNDEDSSDEDDEDCSQAI. Acidic residues predominate over residues 960 to 972; the sequence is NDEDSSDEDDEDC.

It belongs to the DNA polymerase type-B family.

It carries out the reaction DNA(n) + a 2'-deoxyribonucleoside 5'-triphosphate = DNA(n+1) + diphosphate. Functionally, replicates the viral genome, host DNA polymerases cannot substitute for the viral enzyme in this process. The protein is DNA polymerase (POL) of Choristoneura fumiferana (Spruce budworm moth).